A 555-amino-acid polypeptide reads, in one-letter code: Glutamine--tRNA ligase (555 aa).

A 'HIGH' region motif is present at residues 34–44 (PEPNGYLHIGH). ATP contacts are provided by residues 35–37 (EPN) and 41–47 (HIGHAKS). D67 and Y212 together coordinate L-glutamine. Residues T231, 261-262 (RL), and 269-271 (MSK) each bind ATP. Positions 268–272 (IMSKR) match the 'KMSKS' region motif.

It belongs to the class-I aminoacyl-tRNA synthetase family. In terms of assembly, monomer.

Its subcellular location is the cytoplasm. It carries out the reaction tRNA(Gln) + L-glutamine + ATP = L-glutaminyl-tRNA(Gln) + AMP + diphosphate. This chain is Glutamine--tRNA ligase, found in Yersinia enterocolitica serotype O:8 / biotype 1B (strain NCTC 13174 / 8081).